A 209-amino-acid chain; its full sequence is Large ribosomal subunit protein uL3 (209 aa).

Position 150 is an N5-methylglutamine (Q150).

Belongs to the universal ribosomal protein uL3 family. In terms of assembly, part of the 50S ribosomal subunit. Forms a cluster with proteins L14 and L19. In terms of processing, methylated by PrmB.

In terms of biological role, one of the primary rRNA binding proteins, it binds directly near the 3'-end of the 23S rRNA, where it nucleates assembly of the 50S subunit. This Photobacterium profundum (strain SS9) protein is Large ribosomal subunit protein uL3.